We begin with the raw amino-acid sequence, 391 residues long: Acetyl-CoA acetyltransferase (391 aa).

Catalysis depends on C88, which acts as the Acyl-thioester intermediate. Catalysis depends on proton acceptor residues H347 and C377.

The protein belongs to the thiolase-like superfamily. Thiolase family. As to quaternary structure, homotetramer.

It is found in the cytoplasm. It catalyses the reaction 2 acetyl-CoA = acetoacetyl-CoA + CoA. Its pathway is metabolic intermediate biosynthesis; (R)-mevalonate biosynthesis; (R)-mevalonate from acetyl-CoA: step 1/3. The sequence is that of Acetyl-CoA acetyltransferase (phaA) from Paracoccus denitrificans.